A 251-amino-acid polypeptide reads, in one-letter code: Large ribosomal subunit protein uL16m (251 aa).

The N-terminal 29 residues, 1-29 (MWRLLTRAPAPLWRMHFSDTWAALPTSAG), are a transit peptide targeting the mitochondrion.

The protein belongs to the universal ribosomal protein uL16 family. As to quaternary structure, component of the mitochondrial ribosome large subunit (39S) which comprises a 16S rRNA and about 50 distinct proteins.

It localises to the mitochondrion. The sequence is that of Large ribosomal subunit protein uL16m (Mrpl16) from Rattus norvegicus (Rat).